The primary structure comprises 263 residues: Endonuclease 8 (263 aa).

Pro2 serves as the catalytic Schiff-base intermediate with DNA. The active-site Proton donor is Glu3. Residue Lys53 is the Proton donor; for beta-elimination activity of the active site. DNA contacts are provided by Gln70, Arg125, and Asn169. The FPG-type zinc finger occupies 229 to 263; it reads KVFHRDGEACERCGGIIEKTTLSSRPFYWCPHCQK. Arg253 (proton donor; for delta-elimination activity) is an active-site residue.

Belongs to the FPG family. The cofactor is Zn(2+).

The enzyme catalyses 2'-deoxyribonucleotide-(2'-deoxyribose 5'-phosphate)-2'-deoxyribonucleotide-DNA = a 3'-end 2'-deoxyribonucleotide-(2,3-dehydro-2,3-deoxyribose 5'-phosphate)-DNA + a 5'-end 5'-phospho-2'-deoxyribonucleoside-DNA + H(+). In terms of biological role, involved in base excision repair of DNA damaged by oxidation or by mutagenic agents. Acts as a DNA glycosylase that recognizes and removes damaged bases. Has a preference for oxidized pyrimidines, such as thymine glycol, 5,6-dihydrouracil and 5,6-dihydrothymine. Has AP (apurinic/apyrimidinic) lyase activity and introduces nicks in the DNA strand. Cleaves the DNA backbone by beta-delta elimination to generate a single-strand break at the site of the removed base with both 3'- and 5'-phosphates. This Salmonella paratyphi B (strain ATCC BAA-1250 / SPB7) protein is Endonuclease 8.